The primary structure comprises 534 residues: Prolyl 4-hydroxylase subunit alpha-1 (534 aa).

The first 17 residues, 1-17, serve as a signal peptide directing secretion; it reads MIWVVLMMAILLPQSLA. The N-linked (GlcNAc...) asparagine glycan is linked to N113. A TPR repeat occupies 205–238; it reads VSVLDYLSYAVYQQGDLDKALLLTKKLLELDPEH. N-linked (GlcNAc...) asparagine glycosylation occurs at N259. A Fe2OG dioxygenase domain is found at 411-519; it reads TAEELQVANY…KWVSNKWLHE (109 aa). Fe cation is bound by residues H429, D431, and H500. Residue K510 coordinates 2-oxoglutarate.

It belongs to the P4HA family. As to quaternary structure, heterotetramer of two alpha-1 chains and two beta chains (P4HB)(the beta chain is the multi-functional PDI), where P4HB plays the role of a structural subunit; this tetramer catalyzes the formation of 4-hydroxyproline in collagen. It depends on Fe(2+) as a cofactor. L-ascorbate serves as cofactor. In terms of tissue distribution, expressed at least in brain, heart and lung.

It is found in the endoplasmic reticulum lumen. It carries out the reaction L-prolyl-[collagen] + 2-oxoglutarate + O2 = trans-4-hydroxy-L-prolyl-[collagen] + succinate + CO2. With respect to regulation, inhibited by poly(L-proline). Its function is as follows. Catalyzes the post-translational formation of 4-hydroxyproline in -Xaa-Pro-Gly- sequences in collagens and other proteins. The chain is Prolyl 4-hydroxylase subunit alpha-1 (P4ha1) from Mus musculus (Mouse).